Consider the following 208-residue polypeptide: CKLF-like MARVEL transmembrane domain-containing protein 4 (208 aa).

Positions 1-11 (MRGGEELDGFE) are enriched in acidic residues. Residues 1–38 (MRGGEELDGFEGEASSTSMISGASSPYQPTTEPVSQRR) form a disordered region. A compositionally biased stretch (low complexity) spans 15-25 (SSTSMISGASS). The 128-residue stretch at 49 to 176 (YLRGALGRLK…STFLAMQKWR (128 aa)) folds into the MARVEL domain. Transmembrane regions (helical) follow at residues 59–79 (VAQVILALIAFICIETIMECS), 85–105 (YFFEFVSCSAFVVTGVLLILF), 123–143 (LVNTGLSTFFFFIASIVLAAL), and 151–171 (IAAVIFGFLATAAYAVSTFLA). A Phosphoserine modification is found at S194.

It belongs to the chemokine-like factor family. In terms of assembly, interacts with PD1L1 and CMTM6.

It localises to the membrane. In terms of biological role, acts as a backup for CMTM6 to regulate plasma membrane expression of PD-L1/CD274, an immune inhibitory ligand critical for immune tolerance to self and antitumor immunity. May protect PD-L1/CD274 from being polyubiquitinated and targeted for degradation. This Mus musculus (Mouse) protein is CKLF-like MARVEL transmembrane domain-containing protein 4.